The following is a 117-amino-acid chain: MARVKRGVIARARHKKVLKAAKGYYGARSRVYRVAFQAVIKAGQYAYRDRRQRKRQFRQLWIARINAAARQNGLSYSKFINGLKKASVEIDRKILADIAVFDKVAFAALVEKAKSAL.

It belongs to the bacterial ribosomal protein bL20 family.

Its function is as follows. Binds directly to 23S ribosomal RNA and is necessary for the in vitro assembly process of the 50S ribosomal subunit. It is not involved in the protein synthesizing functions of that subunit. This Mannheimia succiniciproducens (strain KCTC 0769BP / MBEL55E) protein is Large ribosomal subunit protein bL20.